A 198-amino-acid polypeptide reads, in one-letter code: HTH-type transcriptional repressor DhaR (198 aa).

The region spanning 4-64 is the HTH tetR-type domain; sequence TPVRQHLVEK…QVLQEFFSDL (61 aa).

In terms of biological role, transcriptional repressor for the dhaA haloalkane dehalogenase gene. This is HTH-type transcriptional repressor DhaR (dhaR) from Mycobacterium sp. (strain GP1).